The chain runs to 429 residues: Neuronal pentraxin-2 (429 aa).

Positions 1–14 (MLALLTVGVALAVA) are cleaved as a signal peptide. Residues asparagine 146 and asparagine 187 are each glycosylated (N-linked (GlcNAc...) asparagine). Residues 221–422 (DAFKVSLPLR…GASKWPVETC (202 aa)) enclose the Pentraxin (PTX) domain. Cysteine 251 and cysteine 311 are joined by a disulfide. The Ca(2+) site is built by asparagine 275, glutamate 353, glutamine 354, aspartate 355, and glutamine 365. Asparagine 391 carries N-linked (GlcNAc...) asparagine glycosylation.

In terms of assembly, homooligomer or heterooligomer (probably pentamer) with neuronal pentraxin receptor (NPTXR). Requires Ca(2+) as cofactor.

It localises to the secreted. Functionally, likely to play role in the modification of cellular properties that underlie long-term plasticity. Binds to agar matrix in a calcium-dependent manner. This chain is Neuronal pentraxin-2 (Nptx2), found in Mus musculus (Mouse).